A 312-amino-acid polypeptide reads, in one-letter code: Pantothenate synthetase (312 aa).

Methionine 42–histidine 49 is a binding site for ATP. Histidine 49 serves as the catalytic Proton donor. Glutamine 73 contributes to the (R)-pantoate binding site. Glutamine 73 is a binding site for beta-alanine. Position 159-162 (glycine 159–aspartate 162) interacts with ATP. Glutamine 165 contributes to the (R)-pantoate binding site. Residues valine 188 and leucine 196–arginine 199 each bind ATP.

Belongs to the pantothenate synthetase family. As to quaternary structure, homodimer.

It is found in the cytoplasm. The enzyme catalyses (R)-pantoate + beta-alanine + ATP = (R)-pantothenate + AMP + diphosphate + H(+). It functions in the pathway cofactor biosynthesis; (R)-pantothenate biosynthesis; (R)-pantothenate from (R)-pantoate and beta-alanine: step 1/1. Functionally, catalyzes the condensation of pantoate with beta-alanine in an ATP-dependent reaction via a pantoyl-adenylate intermediate. The polypeptide is Pantothenate synthetase (Rhodococcus jostii (strain RHA1)).